We begin with the raw amino-acid sequence, 271 residues long: MQQEIIQVTGVKPVIDAEEEIKQRVQFLKEYLVHTGAKGLVLGISGGQDSSLAGRLCQIAVEELRSETNRDYQFYAVRLPYGQQQDESDAQLALSFIRPDHALRVDIKPAVAASMASFEQATGDVLSDFSKGNTKARERMKVQYDIAAHYGCLVVGTDHAAEFVTGFYTKHGDGACDLTPLTGLNKRQGKQLLRQLQAPEGLIEKVPTADLEDNQPGLPDEQALGMTYNEIDDYLEGKTISAESQAKLEAQYKRVGHKHHMPVSPLDTWWK.

43–50 (GISGGQDS) is a binding site for ATP. Asp49 lines the Mg(2+) pocket. Arg137 provides a ligand contact to deamido-NAD(+). Residue Thr157 participates in ATP binding. A Mg(2+)-binding site is contributed by Glu162. Lys170 and Asp177 together coordinate deamido-NAD(+). ATP contacts are provided by Lys186 and Thr208. 257–258 (HK) is a deamido-NAD(+) binding site.

It belongs to the NAD synthetase family. Homodimer.

It catalyses the reaction deamido-NAD(+) + NH4(+) + ATP = AMP + diphosphate + NAD(+) + H(+). It functions in the pathway cofactor biosynthesis; NAD(+) biosynthesis; NAD(+) from deamido-NAD(+) (ammonia route): step 1/1. Catalyzes the ATP-dependent amidation of deamido-NAD to form NAD. Uses ammonia as a nitrogen source. The chain is NH(3)-dependent NAD(+) synthetase from Exiguobacterium sibiricum (strain DSM 17290 / CCUG 55495 / CIP 109462 / JCM 13490 / 255-15).